A 71-amino-acid polypeptide reads, in one-letter code: Small ribosomal subunit protein bS18 (71 aa).

The protein belongs to the bacterial ribosomal protein bS18 family. In terms of assembly, part of the 30S ribosomal subunit. Forms a tight heterodimer with protein bS6.

In terms of biological role, binds as a heterodimer with protein bS6 to the central domain of the 16S rRNA, where it helps stabilize the platform of the 30S subunit. The polypeptide is Small ribosomal subunit protein bS18 (Synechococcus sp. (strain JA-2-3B'a(2-13)) (Cyanobacteria bacterium Yellowstone B-Prime)).